A 237-amino-acid polypeptide reads, in one-letter code: tRNA (guanine-N(7)-)-methyltransferase (237 aa).

Residues glutamate 68, glutamate 93, aspartate 120, and aspartate 143 each contribute to the S-adenosyl-L-methionine site. Aspartate 143 is a catalytic residue. Substrate is bound by residues lysine 147, aspartate 179, and 216-219 (TKFE).

Belongs to the class I-like SAM-binding methyltransferase superfamily. TrmB family.

It carries out the reaction guanosine(46) in tRNA + S-adenosyl-L-methionine = N(7)-methylguanosine(46) in tRNA + S-adenosyl-L-homocysteine. Its pathway is tRNA modification; N(7)-methylguanine-tRNA biosynthesis. Functionally, catalyzes the formation of N(7)-methylguanine at position 46 (m7G46) in tRNA. The sequence is that of tRNA (guanine-N(7)-)-methyltransferase from Shewanella piezotolerans (strain WP3 / JCM 13877).